The chain runs to 60 residues: Large ribosomal subunit protein uL30 (60 aa).

It belongs to the universal ribosomal protein uL30 family. As to quaternary structure, part of the 50S ribosomal subunit.

In Polaromonas sp. (strain JS666 / ATCC BAA-500), this protein is Large ribosomal subunit protein uL30.